Here is a 367-residue protein sequence, read N- to C-terminus: UDP-N-acetylglucosamine--N-acetylmuramyl-(pentapeptide) pyrophosphoryl-undecaprenol N-acetylglucosamine transferase (367 aa).

Residues 13–15 (TGG), Arg-168, Ser-196, Ile-252, and Gln-297 each bind UDP-N-acetyl-alpha-D-glucosamine.

It belongs to the glycosyltransferase 28 family. MurG subfamily.

The protein localises to the cell inner membrane. It catalyses the reaction di-trans,octa-cis-undecaprenyl diphospho-N-acetyl-alpha-D-muramoyl-L-alanyl-D-glutamyl-meso-2,6-diaminopimeloyl-D-alanyl-D-alanine + UDP-N-acetyl-alpha-D-glucosamine = di-trans,octa-cis-undecaprenyl diphospho-[N-acetyl-alpha-D-glucosaminyl-(1-&gt;4)]-N-acetyl-alpha-D-muramoyl-L-alanyl-D-glutamyl-meso-2,6-diaminopimeloyl-D-alanyl-D-alanine + UDP + H(+). The protein operates within cell wall biogenesis; peptidoglycan biosynthesis. Cell wall formation. Catalyzes the transfer of a GlcNAc subunit on undecaprenyl-pyrophosphoryl-MurNAc-pentapeptide (lipid intermediate I) to form undecaprenyl-pyrophosphoryl-MurNAc-(pentapeptide)GlcNAc (lipid intermediate II). This is UDP-N-acetylglucosamine--N-acetylmuramyl-(pentapeptide) pyrophosphoryl-undecaprenol N-acetylglucosamine transferase from Methylibium petroleiphilum (strain ATCC BAA-1232 / LMG 22953 / PM1).